A 250-amino-acid polypeptide reads, in one-letter code: Triosephosphate isomerase (250 aa).

9–11 is a binding site for substrate; the sequence is NWK. Residue His95 is the Electrophile of the active site. Glu167 acts as the Proton acceptor in catalysis. Residues Gly173, Ser213, and 234–235 contribute to the substrate site; that span reads GG.

This sequence belongs to the triosephosphate isomerase family. As to quaternary structure, homodimer.

The protein resides in the cytoplasm. It catalyses the reaction D-glyceraldehyde 3-phosphate = dihydroxyacetone phosphate. It functions in the pathway carbohydrate biosynthesis; gluconeogenesis. The protein operates within carbohydrate degradation; glycolysis; D-glyceraldehyde 3-phosphate from glycerone phosphate: step 1/1. Involved in the gluconeogenesis. Catalyzes stereospecifically the conversion of dihydroxyacetone phosphate (DHAP) to D-glyceraldehyde-3-phosphate (G3P). This chain is Triosephosphate isomerase, found in Herpetosiphon aurantiacus (strain ATCC 23779 / DSM 785 / 114-95).